A 907-amino-acid polypeptide reads, in one-letter code: Probable dipeptidyl-aminopeptidase B (907 aa).

Over residues 1–26 (MPRQRAPKEEEAELLTKQERSTRSSE) the composition is skewed to basic and acidic residues. The disordered stretch occupies residues 1 to 70 (MPRQRAPKEE…EKYTDEDDEA (70 aa)). The Cytoplasmic segment spans residues 1 to 93 (MPRQRAPKEE…PVAVDKKTRR (93 aa)). Positions 30–44 (DASVSSISTTSLVLE) are enriched in low complexity. A helical; Signal-anchor for type II membrane protein transmembrane segment spans residues 94-114 (WLWIVGIACVTGWALALVFFL). The Vacuolar segment spans residues 115 to 907 (MSGSYKHVST…SQVDARLERR (793 aa)). N560 carries an N-linked (GlcNAc...) asparagine glycan. S751 acts as the Charge relay system in catalysis. N805 is a glycosylation site (N-linked (GlcNAc...) asparagine). Active-site charge relay system residues include D828 and H861.

Belongs to the peptidase S9B family.

It localises to the vacuole membrane. The catalysed reaction is Release of an N-terminal dipeptide, Xaa-Yaa-|-Zaa-, from a polypeptide, preferentially when Yaa is Pro, provided Zaa is neither Pro nor hydroxyproline.. Its function is as follows. Type IV dipeptidyl-peptidase which removes N-terminal dipeptides sequentially from polypeptides having unsubstituted N-termini provided that the penultimate residue is proline. The chain is Probable dipeptidyl-aminopeptidase B (dapB) from Pyrenophora teres f. teres (strain 0-1) (Barley net blotch fungus).